The sequence spans 255 residues: MKNNKIKIKSSNLNVHYGEKQALFDVDLDIYDKEVTALIGPSGCGKSTFIRCINRMNDVIDICKVEGSITIDDEEIIDKNLDVVGLREKIGMVFQKPNPFPKSIYDNISYGPTIHGLTENKTDMDEIVENSLKKAALWNEVKDRLNEAGTGLSGGQQQRLCIARAISVNPQVILMDEPCSALDPIATAKIEELIDELKKSYTIVIVTHSMSQAVRVSQRTGFFHLGKIIEVDTTEKIFKNPGNKMTQDYITGRFG.

Residues 8–250 form the ABC transporter domain; that stretch reads IKSSNLNVHY…PGNKMTQDYI (243 aa). Residue 40–47 participates in ATP binding; that stretch reads GPSGCGKS.

Belongs to the ABC transporter superfamily. Phosphate importer (TC 3.A.1.7) family. In terms of assembly, the complex is composed of two ATP-binding proteins (PstB), two transmembrane proteins (PstC and PstA) and a solute-binding protein (PstS).

The protein resides in the cell inner membrane. The catalysed reaction is phosphate(out) + ATP + H2O = ADP + 2 phosphate(in) + H(+). Its function is as follows. Part of the ABC transporter complex PstSACB involved in phosphate import. Responsible for energy coupling to the transport system. This is Phosphate import ATP-binding protein PstB from Pelagibacter ubique (strain HTCC1062).